Here is a 2209-residue protein sequence, read N- to C-terminus: MGAQVSSQKVGAHENSNRAYGGSTINYTTINYYRDSASNAASKQDFSQDPSKFTEPIKDVLIKTSPMLNSPNIEACGYSDRVLQLTLGNSTITTQEAANSVVAYGRWPEYLRDSEANPVDQPTEPDVAACRFYTLDTVSWTKESRGWWWKLPDALRDMGLFGQNMYYHYLGRSGYTVHVQCNASKFHQGALGVFAVPEMCLAGDSNTTTMHTSYQNANPGEKGGTFTGTFTPDDNQTSPARRFCPVDYLFGNGTLLGNAFVFPHQIINLRTNNCATLVLPYVNSLSIDSMVKHNNWGIAILPLAPLNFASESSPEIPITLTIAPMCCEFNGLRNITLPRLQGLPVMNTPGSNQYLTADNFQSPCALPEFDVTPPIDIPGEVKNMMELAEIDTMIPFDLSAKKKNTMEMYRVRLSDKPHTDDPILCLSLSPASDPRLSHTMLGEILNYYTHWAGSLKFTFLFCGSMMATGKLLVSYAPPGADPPKKRKEAMLGTHVIWDIGLQSSCTMVVPWISNTTYRQTIDDSFTEGGYISVFYQTRIVVPLSTPREMDILGFVSACNDFSVRLMRDTTHIEQKALAQGLGQMLESMIDNTVRETVGAATSRDALPNTEASGPAHSKEIPALTAVETGATNPLVPSDTVQTRHVVQHRSRSESSIESFFARGACVAIITVDNSASTKNKDKLFTVWKITYKDTVQLRRKLEFFTYSRFDMEFTFVVTANFTETNNGHALNQVYQIMYVPPGAPVPEKWDDYTWQTSSNPSIFYTYGTAPARISVPYVGISNAYSHFYDGFSKVPLKDQSAALGDSLYGAASLNDFGILAVRVVNDHNPTKVTSKIRVYLKPKHIRVWCPRPPRAVAYYGPGVDYKDGTLTPLSTKDLTTYGFGHQNKAVYTAGYKICNYHLATQEDLQNAVNVMWNRDLLVTESRAQGTDSIARCNCNAGVYYCESRRKYYPVSFVGPTFQYMEANNYYPARYQSHMLIGHGFASPGDCGGILRCHHGVIGIITAGGEGLVAFTDIRDLYAYEEEAMEQGITNYIESLGAAFGSGFTQQIGDKITELTNMVTSTITEKLLKNLIKIISSLVIITRNYEDTTTVLATLALLGCDASPWQWLRKKACDVLEIPYVTKQGDSWLKKFTEACNAAKGLEWVSNKISKFIDWLKEKIIPQARDKLEFVTKLRQLEMLENQISTIHQSCPSQEHQEILFNNVRWLSIQSKRFAPLYAVEAKRIQKLEHTINNYIQFKSKHRIEPVCLLVHGSPGTGKSVATNLIARAIAERENTSTYSLPPDPSHFDGYKQQGVVIMDDLNQNPDGADMKLFCQMVSTVEFIPPMASLEEKGILFTSNYVLASTNSSRISPPTVAHSDALARRFAFDMDIQVMNEYSRDGKLNMAMATEMCKNCHQPANFKRCCPLVCGKAIQLMDKSSRVRYSIDQITTMIINERNRRSNIGNCMEALFQGPLQYKDLKIDIKTSPPPECINDLLQAVDSQEVRDYCEKKGWIVNITSQVQTERNINRAMTILQAVTTFAAVAGVVYVMYKLFAGHQGAYTGLPNKKPNVPTIRTAKVQGPGFDYAVAMAKRNIVTATTSKGEFTMLGVHDNVAILPTHASPGESIVIDGKEVEILDAKALEDQAGTNLEITIITLKRNEKFRDIRPHIPTQITETNDGVLIVNTSKYPNMYVPVGAVTEQGYLNLGGRQTARTLMYNFPTRAGQCGGVITCTGKVIGMHVGGNGSHGFAAALKRSYFTQSQGEIQWMRPSKEVGYPIINAPSKTKLEPSAFHYVFEGVKEPAVLTKNDPRLKTNFEEAIFSKYVGNKITEVDEHMKEAVDHYAGQLMSLDINTEQMCLEDAMYGTDGLEALDLSTSAGYPYVAMGKKKRDILNKQTRDTKEMQKLLDTYGINLPLVTYVKDELRSKTKVEQGKSRLIEASSLNDSVAMRMAFGNLYAAFHKNPGVITGSAVGCDPDLFWSKIPVLMEEKLFAFDYTGYDASLSPAWFEALEMVLEKIGFGDRVDYIDYLNHSHHLYKNKTYCVKGGMPSGCSGTSIFNSMINNLIIRTLLLKTYKGIDLDHLKMIAYGDDVIASYPHEVDASLLAQSGKDYGLTMTPADKSAIFETVTWENVTFLKRFFRADEKYPFLIHPVMPMKEIHESIRWTKDPRNTQDHVRSLCLLAWHNGEEEYNKFLAKIRSVPIGRALLLPEYSTLYRRWLDSF.

Glycine 2 carries N-myristoyl glycine; by host lipidation. Residues 2–1520 (GAQVSSQKVG…NINRAMTILQ (1519 aa)) lie on the Cytoplasmic side of the membrane. Positions 580 to 600 (GLGQMLESMIDNTVRETVGAA) are amphipathic alpha-helix. Residues histidine 901 and aspartate 919 each act as for protease 2A activity in the active site. Zn(2+)-binding residues include cysteine 936 and cysteine 938. Cysteine 990 (for protease 2A activity) is an active-site residue. Zn(2+) is bound by residues cysteine 996 and histidine 998. Positions 1128–1200 (GDSWLKKFTE…HQSCPSQEHQ (73 aa)) are membrane-binding. The tract at residues 1128–1266 (GDSWLKKFTE…SPGTGKSVAT (139 aa)) is oligomerization. Residues 1149–1153 (SNKIS) are RNA-binding. Residues 1232–1388 (EHTINNYIQF…NEYSRDGKLN (157 aa)) form the SF3 helicase domain. ATP is bound at residue 1256 to 1263 (GSPGTGKS). Zn(2+) is bound by residues cysteine 1396, cysteine 1399, cysteine 1408, and cysteine 1413. Residues 1396–1413 (CKNCHQPANFKRCCPLVC) form a C4-type zinc finger. Residues 1440-1447 (ERNRRSNI) are RNA-binding. The oligomerization stretch occupies residues 1451-1456 (MEALFQ). The stretch at 1521 to 1536 (AVTTFAAVAGVVYVMY) is an intramembrane region. Topologically, residues 1537-2209 (KLFAGHQGAY…TLYRRWLDSF (673 aa)) are cytoplasmic. Tyrosine 1546 is modified (O-(5'-phospho-RNA)-tyrosine). The Peptidase C3 domain maps to 1566-1744 (GPGFDYAVAM…FAAALKRSYF (179 aa)). Active-site for protease 3C activity residues include histidine 1605, glutamate 1636, and cysteine 1712. The region spanning 1975 to 2090 (EKLFAFDYTG…SYPHEVDASL (116 aa)) is the RdRp catalytic domain. Mg(2+) is bound by residues aspartate 1981 and aspartate 2076.

It belongs to the picornaviruses polyprotein family. As to quaternary structure, interacts with capsid protein VP1 and capsid protein VP3 to form heterotrimeric protomers. In terms of assembly, interacts with capsid protein VP0, and capsid protein VP3 to form heterotrimeric protomers. Interacts with human PVR. Five protomers subsequently associate to form pentamers which serve as building blocks for the capsid. Interacts with capsid protein VP2, capsid protein VP3 and capsid protein VP4 following cleavage of capsid protein VP0. Interacts with capsid protein VP1 and capsid protein VP3 in the mature capsid. As to quaternary structure, interacts with capsid protein VP0 and capsid protein VP1 to form heterotrimeric protomers. Five protomers subsequently associate to form pentamers which serve as building blocks for the capsid. Interacts with capsid protein VP4 in the mature capsid. Interacts with protein 2C; this interaction may be important for virion morphogenesis. In terms of assembly, interacts with capsid protein VP1 and capsid protein VP3. Homodimer. As to quaternary structure, homohexamer; forms a hexameric ring structure with 6-fold symmetry characteristic of AAA+ ATPases. Interacts (via N-terminus) with host RTN3 (via reticulon domain); this interaction is important for viral replication. Interacts with capsid protein VP3; this interaction may be important for virion morphogenesis. In terms of assembly, interacts with protein 3CD. Homodimer. Interacts with host GBF1. Interacts (via GOLD domain) with host ACBD3 (via GOLD domain); this interaction allows the formation of a viral protein 3A/ACBD3 heterotetramer with a 2:2 stoichiometry, which will stimulate the recruitment of host PI4KB in order to synthesize PI4P at the viral RNA replication sites. As to quaternary structure, interacts with RNA-directed RNA polymerase. In terms of assembly, interacts with protein 3AB and with RNA-directed RNA polymerase. Interacts with Viral protein genome-linked and with protein 3CD. Mg(2+) serves as cofactor. Specific enzymatic cleavages in vivo by the viral proteases yield processing intermediates and the mature proteins. Post-translationally, myristoylation is required for the formation of pentamers during virus assembly. Further assembly of 12 pentamers and a molecule of genomic RNA generates the provirion. In terms of processing, during virion maturation, immature virions are rendered infectious following cleavage of VP0 into VP4 and VP2. This maturation seems to be an autocatalytic event triggered by the presence of RNA in the capsid and it is followed by a conformational change infectious virion. Myristoylation is required during RNA encapsidation and formation of the mature virus particle. Post-translationally, VPg is uridylylated by the polymerase into VPg-pUpU. This acts as a nucleotide-peptide primer for the genomic RNA replication.

The protein resides in the virion. It is found in the host cytoplasm. Its subcellular location is the host cytoplasmic vesicle membrane. It localises to the host nucleus. The catalysed reaction is a ribonucleoside 5'-triphosphate + H2O = a ribonucleoside 5'-diphosphate + phosphate + H(+). The enzyme catalyses Selective cleavage of Tyr-|-Gly bond in the picornavirus polyprotein.. It catalyses the reaction RNA(n) + a ribonucleoside 5'-triphosphate = RNA(n+1) + diphosphate. It carries out the reaction Selective cleavage of Gln-|-Gly bond in the poliovirus polyprotein. In other picornavirus reactions Glu may be substituted for Gln, and Ser or Thr for Gly.. Replication or transcription is subject to high level of random mutations by the nucleotide analog ribavirin. Functionally, forms an icosahedral capsid of pseudo T=3 symmetry with capsid proteins VP2 and VP3. The capsid is 300 Angstroms in diameter, composed of 60 copies of each capsid protein and enclosing the viral positive strand RNA genome. Capsid protein VP1 mainly forms the vertices of the capsid. Capsid protein VP1 interacts with host cell receptor PVR to provide virion attachment to target host cells. This attachment induces virion internalization predominantly through clathrin- and caveolin-independent endocytosis in Hela cells and through caveolin-mediated endocytosis in brain microvascular endothelial cells. Tyrosine kinases are probably involved in the entry process. Virus binding to PVR induces increased junctional permeability and rearrangement of junctional proteins. Modulation of endothelial tight junctions, as well as cytolytic infection of endothelial cells themselves, may result in loss of endothelial integrity which may help the virus to reach the CNS. After binding to its receptor, the capsid undergoes conformational changes. Capsid protein VP1 N-terminus (that contains an amphipathic alpha-helix) and capsid protein VP4 are externalized. Together, they shape a pore in the host membrane through which viral genome is translocated to host cell cytoplasm. In terms of biological role, forms an icosahedral capsid of pseudo T=3 symmetry with capsid proteins VP2 and VP3. The capsid is 300 Angstroms in diameter, composed of 60 copies of each capsid protein and enclosing the viral positive strand RNA genome. Lies on the inner surface of the capsid shell. After binding to the host receptor, the capsid undergoes conformational changes. Capsid protein VP4 is released, Capsid protein VP1 N-terminus is externalized, and together, they shape a pore in the host membrane through which the viral genome is translocated into the host cell cytoplasm. Its function is as follows. Component of immature procapsids, which is cleaved into capsid proteins VP4 and VP2 after maturation. Allows the capsid to remain inactive before the maturation step. Functionally, cysteine protease that cleaves viral polyprotein and specific host proteins. It is responsible for the autocatalytic cleavage between the P1 and P2 regions, which is the first cleavage occurring in the polyprotein. Also cleaves the host translation initiation factor EIF4G1, in order to shut down the capped cellular mRNA translation. Inhibits the host nucleus-cytoplasm protein and RNA trafficking by cleaving host members of the nuclear pores including NUP98, NUP62 and NUP153. Counteracts stress granule formation probably by antagonizing its assembly or promoting its dissassembly. Cleaves and inhibits host IFIH1/MDA5, thereby inhibiting the type-I IFN production and the establishment of the antiviral state. Cleaves and inhibits host MAVS, thereby inhibiting the type-I IFN production and the establishment of the antiviral state. In terms of biological role, plays an essential role in the virus replication cycle by acting as a viroporin. Creates a pore in the host endoplasmic reticulum and as a consequence releases Ca2+ in the cytoplasm of infected cell. In turn, high levels of cytoplasmic calcium may trigger membrane trafficking and transport of viral ER-associated proteins to viroplasms, sites of viral genome replication. Induces and associates with structural rearrangements of intracellular membranes. Displays RNA-binding, nucleotide binding and NTPase activities. May play a role in virion morphogenesis and viral RNA encapsidation by interacting with the capsid protein VP3. Its function is as follows. Localizes the viral replication complex to the surface of membranous vesicles. Together with protein 3CD binds the Cis-Active RNA Element (CRE) which is involved in RNA synthesis initiation. Acts as a cofactor to stimulate the activity of 3D polymerase, maybe through a nucleid acid chaperone activity. Functionally, localizes the viral replication complex to the surface of membranous vesicles. It inhibits host cell endoplasmic reticulum-to-Golgi apparatus transport and causes the disassembly of the Golgi complex, possibly through GBF1 interaction. This would result in depletion of MHC, trail receptors and IFN receptors at the host cell surface. Plays an essential role in viral RNA replication by recruiting ACBD3 and PI4KB at the viral replication sites, thereby allowing the formation of the rearranged membranous structures where viral replication takes place. In terms of biological role, acts as a primer for viral RNA replication and remains covalently bound to viral genomic RNA. VPg is uridylylated prior to priming replication into VPg-pUpU. The oriI viral genomic sequence may act as a template for this. The VPg-pUpU is then used as primer on the genomic RNA poly(A) by the RNA-dependent RNA polymerase to replicate the viral genome. During genome replication, the VPg-RNA linkage is removed by the host TDP2, thereby accelerating replication. During the late stage of the replication cycle, host TDP2 is excluded from sites of viral RNA synthesis and encapsidation, allowing for the generation of progeny virions. Involved in the viral replication complex and viral polypeptide maturation. It exhibits protease activity with a specificity and catalytic efficiency that is different from protease 3C. Protein 3CD lacks polymerase activity. Protein 3CD binds to the 5'UTR of the viral genome. Its function is as follows. Major viral protease that mediates proteolytic processing of the polyprotein. Cleaves host EIF5B, contributing to host translation shutoff. Also cleaves host PABPC1, contributing to host translation shutoff. Cleaves host RIGI and thus contributes to the inhibition of type I interferon production. Cleaves host NLRP1, triggers host N-glycine-mediated degradation of the autoinhibitory NLRP1 N-terminal fragment. Inhibits the integrated stress response (ISR) in the infected cell by cleaving host G3BP1. Stress granule formation is thus inhibited, which allows protein synthesis and viral replication. Functionally, replicates the viral genomic RNA on the surface of intracellular membranes. May form linear arrays of subunits that propagate along a strong head-to-tail interaction called interface-I. Covalently attaches UMP to a tyrosine of VPg, which is used to prime RNA synthesis. The positive stranded RNA genome is first replicated at virus induced membranous vesicles, creating a dsRNA genomic replication form. This dsRNA is then used as template to synthesize positive stranded RNA genomes. ss(+)RNA genomes are either translated, replicated or encapsidated. The chain is Genome polyprotein from Homo sapiens (Human).